Reading from the N-terminus, the 220-residue chain is Adenylate kinase (220 aa).

An ATP-binding site is contributed by 12–17; that stretch reads GAGKGT. The interval 32–62 is NMP; the sequence is STGDIFRDIVKKENDELGKKIKEIMERGELV. Residues Thr-33, Arg-38, 60-62, 88-91, and Gln-95 each bind AMP; these read ELV and GYPR. Residues 129–166 are LID; that stretch reads ARRICPKCGRIYNLISLPPKEDELCDDCKVKLVQREDD. Residue Arg-130 participates in ATP binding. Residues Cys-133 and Cys-136 each coordinate Zn(2+). 139 to 140 contacts ATP; that stretch reads IY. Positions 153 and 156 each coordinate Zn(2+). AMP contacts are provided by Arg-163 and Arg-174. Residue Ile-202 participates in ATP binding.

Belongs to the adenylate kinase family. As to quaternary structure, monomer.

The protein resides in the cytoplasm. It carries out the reaction AMP + ATP = 2 ADP. Its pathway is purine metabolism; AMP biosynthesis via salvage pathway; AMP from ADP: step 1/1. Its function is as follows. Catalyzes the reversible transfer of the terminal phosphate group between ATP and AMP. Plays an important role in cellular energy homeostasis and in adenine nucleotide metabolism. This Thermotoga maritima (strain ATCC 43589 / DSM 3109 / JCM 10099 / NBRC 100826 / MSB8) protein is Adenylate kinase.